The following is a 286-amino-acid chain: 3-hydroxyanthranilate 3,4-dioxygenase (286 aa).

The tract at residues 1-160 is domain A (catalytic); the sequence is MERRLGVRAW…SEQYRTGKPI (160 aa). Residue arginine 43 coordinates O2. Fe cation contacts are provided by histidine 47, glutamate 53, and histidine 91. Glutamate 53 contributes to the substrate binding site. Substrate is bound by residues arginine 95 and glutamate 105. Residues 161 to 177 are linker; that stretch reads PDQLLKEPPFPLSTRSI. The segment at 178-286 is domain B; the sequence is MEPMSLDAWL…QDPACKKPLG (109 aa).

Belongs to the 3-HAO family. As to quaternary structure, monomer. Fe(2+) serves as cofactor.

It localises to the cytoplasm. It is found in the cytosol. The enzyme catalyses 3-hydroxyanthranilate + O2 = (2Z,4Z)-2-amino-3-carboxymuconate 6-semialdehyde. It participates in cofactor biosynthesis; NAD(+) biosynthesis; quinolinate from L-kynurenine: step 3/3. Catalyzes the oxidative ring opening of 3-hydroxyanthranilate to 2-amino-3-carboxymuconate semialdehyde, which spontaneously cyclizes to quinolinate. This is 3-hydroxyanthranilate 3,4-dioxygenase from Homo sapiens (Human).